The sequence spans 218 residues: Runt-related transcription factor 2 (218 aa).

Residues 67-195 form the Runt domain; sequence RGHKFYLEKK…TVDGPREPRR (129 aa). The segment at 122–138 is required for interaction with FOXO1; it reads VMAGNDENYSAELRNAS. The segment at 189–218 is disordered; sequence GPREPRRHRQKLDDSKPSLFSDRLSDLGRI. K204 is covalently cross-linked (Glycyl lysine isopeptide (Lys-Gly) (interchain with G-Cter in SUMO2)).

As to quaternary structure, heterodimer of an alpha and a beta subunit. The alpha subunit binds DNA as a monomer and through the Runt domain. DNA-binding is increased by heterodimerization. Interacts with XRCC6 (Ku70) and XRCC5 (Ku80). Interacts with CCNB1, KAT6A and KAT6B. Interacts with HIVEP3. Interacts with IFI204. Interaction with SATB2; the interaction results in enhanced DNA binding and transactivation by these transcription factors. Binds to HIPK3. Interacts with FOXO1 (via a C-terminal region); the interaction inhibits RUNX2 transcriptional activity towards BGLAP. Interacts with FOXP3. Interacts with TMEM119. Interacts with OLFM2. Interacts with IPO7; the interaction inhibits RUNX2 nuclear translocation in osteoblasts. Phosphorylated; probably by MAP kinases (MAPK). Phosphorylation by HIPK3 is required for the SPEN/MINT and FGF2 transactivation during osteoblastic differentiation.

It localises to the nucleus. It is found in the cytoplasm. Functionally, transcription factor involved in osteoblastic differentiation and skeletal morphogenesis. Essential for the maturation of osteoblasts and both intramembranous and endochondral ossification. CBF binds to the core site, 5'-PYGPYGGT-3', of a number of enhancers and promoters, including murine leukemia virus, polyomavirus enhancer, T-cell receptor enhancers, osteocalcin, osteopontin, bone sialoprotein, alpha 1(I) collagen, LCK, IL-3 and GM-CSF promoters. Inhibits KAT6B-dependent transcriptional activation. In osteoblasts, supports transcription activation: synergizes with SPEN/MINT to enhance FGFR2-mediated activation of the osteocalcin FGF-responsive element (OCFRE). The protein is Runt-related transcription factor 2 (Runx2) of Rattus norvegicus (Rat).